Consider the following 518-residue polypeptide: Putative BTB/POZ domain and WD-repeat protein R731 (518 aa).

Positions 22–92 (TDCQLHLTDS…FYGFPLEEPN (71 aa)) constitute a BTB domain. The interval 224-246 (NHEESSDDEVNDDEDTDNEDTDD) is disordered. Positions 228–246 (SSDDEVNDDEDTDNEDTDD) are enriched in acidic residues. 2 WD repeats span residues 391-430 (NHSTTINHILYSPKSKYFIFCDENSIIYVYSTKDNYSLIK) and 437-475 (FLKFGVKDFEFMTSKIIVAIDIKGKICIWNIETEQIIQN).

It belongs to the mimivirus BTB/WD family.

The chain is Putative BTB/POZ domain and WD-repeat protein R731 from Acanthamoeba polyphaga (Amoeba).